We begin with the raw amino-acid sequence, 192 residues long: Inosine triphosphate pyrophosphatase (192 aa).

ITP is bound at residue 11-16 (TGNKNK). Glu41 is a binding site for Mg(2+). ITP is bound by residues Lys53, 69–70 (DT), Lys86, 146–149 (FGWD), Lys169, and 174–175 (HR).

This sequence belongs to the HAM1 NTPase family. In terms of assembly, homodimer. Mg(2+) is required as a cofactor. It depends on Mn(2+) as a cofactor.

The protein resides in the cytoplasm. The catalysed reaction is ITP + H2O = IMP + diphosphate + H(+). The enzyme catalyses dITP + H2O = dIMP + diphosphate + H(+). It carries out the reaction XTP + H2O = XMP + diphosphate + H(+). In terms of biological role, pyrophosphatase that hydrolyzes non-canonical purine nucleotides such as inosine triphosphate (ITP), deoxyinosine triphosphate (dITP) or xanthosine 5'-triphosphate (XTP) to their respective monophosphate derivatives. The enzyme does not distinguish between the deoxy- and ribose forms. Probably excludes non-canonical purines from RNA and DNA precursor pools, thus preventing their incorporation into RNA and DNA and avoiding chromosomal lesions. This is Inosine triphosphate pyrophosphatase from Ciona intestinalis (Transparent sea squirt).